The following is a 69-amino-acid chain: Large ribosomal subunit protein bL31 (69 aa).

Residues Cys-16, Cys-18, Cys-37, and Cys-40 each coordinate Zn(2+).

The protein belongs to the bacterial ribosomal protein bL31 family. Type A subfamily. Part of the 50S ribosomal subunit. Zn(2+) is required as a cofactor.

Binds the 23S rRNA. In Syntrophotalea carbinolica (strain DSM 2380 / NBRC 103641 / GraBd1) (Pelobacter carbinolicus), this protein is Large ribosomal subunit protein bL31.